Here is a 362-residue protein sequence, read N- to C-terminus: Tyrosyl-DNA phosphodiesterase 2 (362 aa).

Met1 is subject to N-acetylmethionine. The segment at 1–20 (MELGSCLEGGREAAEEEGEP) is disordered. Glycyl lysine isopeptide (Lys-Gly) (interchain with G-Cter in SUMO2) cross-links involve residues Lys23 and Lys82. Positions 87–109 (LTNEETTDSTTSKISPSEDTQQE) are disordered. A phosphothreonine; by ACVR1B mark is found at Thr88 and Thr92. Polar residues predominate over residues 94 to 109 (DSTTSKISPSEDTQQE). Ser95 carries the phosphoserine modification. An interaction with 5' end of substrate DNA region spans residues 120 to 124 (NIDGL). Mg(2+) is bound by residues Asp122 and Glu152. Residues 226–231 (HLESTR) are interaction with 5' end of substrate DNA. The Proton donor/acceptor role is filled by Asp262. The interval 264-266 (NLR) is interaction with 5' end of substrate DNA.

The protein belongs to the CCR4/nocturin family. As to quaternary structure, interacts with TRAF2, TRAF3, TRAF5, TRAF6, TNFRSF8/CD30, TNFRSF5/CD40, TNFRSF1B/TNF-R75, ETS1, ETS2, FLI1, SMAD3 and ACVR1B/ALK4. In terms of assembly, (Microbial infection) Interacts with Hantaan hantavirus nucleoprotein. (Microbial infection) Interacts with Seoul hantavirus nucleoprotein. Mg(2+) is required as a cofactor. It depends on Mn(2+) as a cofactor. Post-translationally, ubiquitinated by TRAF6. Widely expressed. Highly expressed in various brain regions, including the frontal and occipital lobes, the hippocampus, the striatum and the cerebellum.

It is found in the nucleus. Its subcellular location is the PML body. The protein localises to the nucleolus. The protein resides in the cytoplasm. In terms of biological role, DNA repair enzyme that can remove a variety of covalent adducts from DNA through hydrolysis of a 5'-phosphodiester bond, giving rise to DNA with a free 5' phosphate. Catalyzes the hydrolysis of dead-end complexes between DNA and the topoisomerase 2 (TOP2) active site tyrosine residue. The 5'-tyrosyl DNA phosphodiesterase activity can enable the repair of TOP2-induced DNA double-strand breaks/DSBs without the need for nuclease activity, creating a 'clean' DSB with 5'-phosphate termini that are ready for ligation. Thereby, protects the transcription of many genes involved in neurological development and maintenance from the abortive activity of TOP2. Hydrolyzes 5'-phosphoglycolates on protruding 5' ends on DSBs due to DNA damage by radiation and free radicals. Has preference for single-stranded DNA or duplex DNA with a 4 base pair overhang as substrate. Acts as a regulator of ribosome biogenesis following stress. Also has 3'-tyrosyl DNA phosphodiesterase activity, but less efficiently and much slower than TDP1. Constitutes the major if not only 5'-tyrosyl-DNA phosphodiesterase in cells. Also acts as an adapter by participating in the specific activation of MAP3K7/TAK1 in response to TGF-beta: associates with components of the TGF-beta receptor-TRAF6-TAK1 signaling module and promotes their ubiquitination dependent complex formation. Involved in non-canonical TGF-beta induced signaling routes. May also act as a negative regulator of ETS1 and may inhibit NF-kappa-B activation. (Microbial infection) Used by picornaviruses to remove the small polypeptide, VPg (virus Protein genome-linked, the primer for viral RNA synthesis), from the genomic RNA of the virus. Acts as a 5'-tyrosyl RNA phosphodiesterase and cleaves the covalent VPg-Tyr-RNA bond. This cleavage would play a role in viral replication and occur in viral replication vesicles, but would not act on viral mRNA. The sequence is that of Tyrosyl-DNA phosphodiesterase 2 from Homo sapiens (Human).